We begin with the raw amino-acid sequence, 370 residues long: Phosphoribosylformylglycinamidine cyclo-ligase (370 aa).

Belongs to the AIR synthase family.

The protein localises to the cytoplasm. The catalysed reaction is 2-formamido-N(1)-(5-O-phospho-beta-D-ribosyl)acetamidine + ATP = 5-amino-1-(5-phospho-beta-D-ribosyl)imidazole + ADP + phosphate + H(+). It functions in the pathway purine metabolism; IMP biosynthesis via de novo pathway; 5-amino-1-(5-phospho-D-ribosyl)imidazole from N(2)-formyl-N(1)-(5-phospho-D-ribosyl)glycinamide: step 2/2. This is Phosphoribosylformylglycinamidine cyclo-ligase from Rhodospirillum rubrum (strain ATCC 11170 / ATH 1.1.1 / DSM 467 / LMG 4362 / NCIMB 8255 / S1).